A 450-amino-acid chain; its full sequence is 23S rRNA (uracil(1939)-C(5))-methyltransferase RlmD (450 aa).

The TRAM domain occupies 12 to 70 (SKQLSAKLSLNVDQLDHLGAGIAQYQGKVVFIPGALPDETVTVQLTEQKKNYARAKLIK). Positions 83, 89, 92, and 171 each coordinate [4Fe-4S] cluster. Positions 283, 312, 317, 333, 360, and 380 each coordinate S-adenosyl-L-methionine. Cysteine 406 (nucleophile) is an active-site residue.

Belongs to the class I-like SAM-binding methyltransferase superfamily. RNA M5U methyltransferase family. RlmD subfamily.

The enzyme catalyses uridine(1939) in 23S rRNA + S-adenosyl-L-methionine = 5-methyluridine(1939) in 23S rRNA + S-adenosyl-L-homocysteine + H(+). Its function is as follows. Catalyzes the formation of 5-methyl-uridine at position 1939 (m5U1939) in 23S rRNA. In Shewanella putrefaciens (strain CN-32 / ATCC BAA-453), this protein is 23S rRNA (uracil(1939)-C(5))-methyltransferase RlmD.